A 454-amino-acid polypeptide reads, in one-letter code: UPF0210 protein BL1209 (454 aa).

This sequence belongs to the UPF0210 family. Homodimer.

The protein is UPF0210 protein BL1209 of Bifidobacterium longum (strain NCC 2705).